Here is a 533-residue protein sequence, read N- to C-terminus: D-2-hydroxyglutarate dehydrogenase, mitochondrial (533 aa).

The transit peptide at 1 to 55 directs the protein to the mitochondrion; the sequence is MGLFQKCSRLSLRSSYMWSVCPQYSIAVTARETPDRALIVHWTQHRDVHNSRRLG. One can recognise an FAD-binding PCMH-type domain in the interval 107–286; it reads VQGSSDVLLR…TAVSILCPRK (180 aa). Positions 397, 401, and 412 each coordinate (R)-2-hydroxyglutarate. R397 is a binding site for (R)-lactate. Residues R397, T401, and K412 each coordinate (R)-malate. Residues H445 and H452 each contribute to the Zn(2+) site. N454 contributes to the (R)-2-hydroxyglutarate binding site. E486 contributes to the Zn(2+) binding site. (R)-2-hydroxyglutarate is bound at residue H487. H487 provides a ligand contact to (R)-lactate. Position 487 (H487) interacts with (R)-malate.

Belongs to the FAD-binding oxidoreductase/transferase type 4 family. FAD serves as cofactor.

It is found in the mitochondrion. The enzyme catalyses (R)-2-hydroxyglutarate + A = 2-oxoglutarate + AH2. It catalyses the reaction (R)-malate + A = oxaloacetate + AH2. Catalyzes the oxidation of D-2-hydroxyglutarate (D-2-HG) to alpha-ketoglutarate. Also catalyzes the oxidation of other D-2-hydroxyacids, such as D-malate (D-MAL) and D-lactate (D-LAC). Exhibits high activities towards D-2-HG and D-MAL but a very weak activity towards D-LAC. In Danio rerio (Zebrafish), this protein is D-2-hydroxyglutarate dehydrogenase, mitochondrial (d2hgdh).